The following is a 434-amino-acid chain: NFATC2-interacting protein (434 aa).

2 disordered regions span residues methionine 1–leucine 63 and glycine 176–asparagine 237. Residues glycine 28 to cysteine 59 show a composition bias toward pro residues. A compositionally biased stretch (basic residues) spans proline 228 to asparagine 237. In terms of domain architecture, Ubiquitin-like spans proline 275–aspartate 351.

It localises to the nucleus. The protein resides in the cytoplasm. Functionally, regulates the magnitude of NFAT-driven transcription of a specific subset of cytokine genes. This is NFATC2-interacting protein (nfatc2ip) from Xenopus tropicalis (Western clawed frog).